Here is a 233-residue protein sequence, read N- to C-terminus: Aspartate/glutamate leucyltransferase (233 aa).

This sequence belongs to the R-transferase family. Bpt subfamily.

The protein localises to the cytoplasm. It carries out the reaction N-terminal L-glutamyl-[protein] + L-leucyl-tRNA(Leu) = N-terminal L-leucyl-L-glutamyl-[protein] + tRNA(Leu) + H(+). The catalysed reaction is N-terminal L-aspartyl-[protein] + L-leucyl-tRNA(Leu) = N-terminal L-leucyl-L-aspartyl-[protein] + tRNA(Leu) + H(+). In terms of biological role, functions in the N-end rule pathway of protein degradation where it conjugates Leu from its aminoacyl-tRNA to the N-termini of proteins containing an N-terminal aspartate or glutamate. This Vibrio cholerae serotype O1 (strain ATCC 39315 / El Tor Inaba N16961) protein is Aspartate/glutamate leucyltransferase.